Reading from the N-terminus, the 258-residue chain is Type III pantothenate kinase (258 aa).

6 to 13 is a binding site for ATP; it reads DVGNSDTV. Residue 108–111 participates in substrate binding; the sequence is GSDR. Catalysis depends on Asp-110, which acts as the Proton acceptor. Asp-130 serves as a coordination point for K(+). Thr-133 serves as a coordination point for ATP. Substrate is bound at residue Thr-185.

Belongs to the type III pantothenate kinase family. As to quaternary structure, homodimer. The cofactor is NH4(+). Requires K(+) as cofactor.

The protein resides in the cytoplasm. It catalyses the reaction (R)-pantothenate + ATP = (R)-4'-phosphopantothenate + ADP + H(+). Its pathway is cofactor biosynthesis; coenzyme A biosynthesis; CoA from (R)-pantothenate: step 1/5. In terms of biological role, catalyzes the phosphorylation of pantothenate (Pan), the first step in CoA biosynthesis. The chain is Type III pantothenate kinase from Thermobifida fusca (strain YX).